The primary structure comprises 455 residues: Chromosomal replication initiator protein DnaA 2 (455 aa).

A domain I, interacts with DnaA modulators region spans residues 1 to 95; that stretch reads MLTCNDCSTW…KRSSPQIAAS (95 aa). The interval 96–112 is domain II; that stretch reads VTKPAVEVSEENKDFQL. Positions 113 to 328 are domain III, AAA+ region; that stretch reads KLNGAYRFDN…GAINKLTAYC (216 aa). ATP contacts are provided by glycine 157, glycine 159, lysine 160, and threonine 161. The tract at residues 329 to 455 is domain IV, binds dsDNA; sequence LLFNKPLTET…IAIDSPQHFV (127 aa).

It belongs to the DnaA family. Oligomerizes as a right-handed, spiral filament on DNA at oriC.

It localises to the cytoplasm. Functionally, plays an essential role in the initiation and regulation of chromosomal replication. ATP-DnaA binds to the origin of replication (oriC) to initiate formation of the DNA replication initiation complex once per cell cycle. Binds the DnaA box (a 9 base pair repeat at the origin) and separates the double-stranded (ds)DNA. Forms a right-handed helical filament on oriC DNA; dsDNA binds to the exterior of the filament while single-stranded (ss)DNA is stabiized in the filament's interior. The ATP-DnaA-oriC complex binds and stabilizes one strand of the AT-rich DNA unwinding element (DUE), permitting loading of DNA polymerase. After initiation quickly degrades to an ADP-DnaA complex that is not apt for DNA replication. Binds acidic phospholipids. In Chlamydia muridarum (strain MoPn / Nigg), this protein is Chromosomal replication initiator protein DnaA 2.